Here is a 24-residue protein sequence, read N- to C-terminus: Grammistin Gs G (24 aa).

The protein belongs to the grammistin family. Group 1 subfamily. Exists as aggregates of 3-4 molecules. Expressed by the skin glands.

The protein resides in the secreted. Thanks to its abundant amphiphilic alpha-helices, it may integrate into membrane phospholipids, leading to lysis of the membrane. Its high hemolytic activity is inhibited by phospholipids, but not by cholesterol. Has antibacterial activity with a broad spectrum against various species of bacteria including both Gram-positive and Gram-negative groups. Also has high ichthyotoxic activity. This chain is Grammistin Gs G, found in Grammistes sexlineatus (Goldenstriped soapfish).